The chain runs to 294 residues: tRNA pseudouridine synthase A (294 aa).

Residue aspartate 64 is the Nucleophile of the active site. Tyrosine 122 is a substrate binding site.

Belongs to the tRNA pseudouridine synthase TruA family. As to quaternary structure, homodimer.

The catalysed reaction is uridine(38/39/40) in tRNA = pseudouridine(38/39/40) in tRNA. Its function is as follows. Formation of pseudouridine at positions 38, 39 and 40 in the anticodon stem and loop of transfer RNAs. This Synechococcus sp. (strain ATCC 27144 / PCC 6301 / SAUG 1402/1) (Anacystis nidulans) protein is tRNA pseudouridine synthase A.